A 534-amino-acid polypeptide reads, in one-letter code: MKKKISQAIIKFFKNENLIIDESKLIIEKSKNFGDYSSNVALIFAKQNKIDSLKLAQTIKNQLLSENLNLEKIEIAPPGFINFFISKNEYANIVSEIIQKGENFGRYSLQKKINLEFVSANPTGFLHLGHLRGAVIGDILANILEFSGNFVFREYYINDFGSQIDRLVGSVFSRYQQIFKKFPLPEEAYLGEDIIWCAQKFFQIYANKFENSSLDDLEAYKIFREKSIEIFLDEIKADLANLSIKFDVFSSESELFRTEKVQKNLANLPFVYKKEEAIWLKTSKFGDQKDRVLVKKNGEFTYFSSDIAYHFEKINSNFKPDFLINIWGADHIGYVDRMKAALKTVNLNQKLDILLYQLVKLFKNGQEFKMSKRMGKTFTIKDLLELVDQDAIRYFISERSYNSLVEFDIGLAAKISLQNPLFLIQYAHARASKLLANSTIAPEKKLKFEAENETILISKLKQFEEIVLKITKNYKINLLNKYLLELANLFNSFYSNSKIIGNQNQNSLLSLTKAVQIVLKNGLKLLGIKAKERI.

Residues 120–130 carry the 'HIGH' region motif; that stretch reads ANPTGFLHLGH.

This sequence belongs to the class-I aminoacyl-tRNA synthetase family. As to quaternary structure, monomer.

The protein localises to the cytoplasm. The enzyme catalyses tRNA(Arg) + L-arginine + ATP = L-arginyl-tRNA(Arg) + AMP + diphosphate. This chain is Arginine--tRNA ligase, found in Mesomycoplasma hyopneumoniae (strain 232) (Mycoplasma hyopneumoniae).